The following is a 333-amino-acid chain: Tetraacyldisaccharide 4'-kinase (333 aa).

Position 60-67 (60-67) interacts with ATP; the sequence is TVGGTGKT.

This sequence belongs to the LpxK family.

The enzyme catalyses a lipid A disaccharide + ATP = a lipid IVA + ADP + H(+). It functions in the pathway glycolipid biosynthesis; lipid IV(A) biosynthesis; lipid IV(A) from (3R)-3-hydroxytetradecanoyl-[acyl-carrier-protein] and UDP-N-acetyl-alpha-D-glucosamine: step 6/6. Its function is as follows. Transfers the gamma-phosphate of ATP to the 4'-position of a tetraacyldisaccharide 1-phosphate intermediate (termed DS-1-P) to form tetraacyldisaccharide 1,4'-bis-phosphate (lipid IVA). The protein is Tetraacyldisaccharide 4'-kinase of Pseudomonas putida (strain ATCC 700007 / DSM 6899 / JCM 31910 / BCRC 17059 / LMG 24140 / F1).